A 321-amino-acid polypeptide reads, in one-letter code: MNFQLIDGEALLAQLQPALGDIKGKLTPNVDMRKVTWFRTGGLAELFYQPADEADLALFLKTLPEFISVTIVGIGSNLLVRDGGIPGVVIRLSAKGFGQVQQVSPKRFLVGAATAGKHLAAAALEAEITGFHFYHGIPGGLGGALKMNAGANGIETAARVVEVYALDRKGRHHILSLADMHYSYRHCAIPKDFIFTAALLEGEPGNRDDIRAAMDEVALHRETVQPVREKTGGSTFRNPENISAWRVIDEAGCRGLQIGGAQMSEMHCNFMINTGQATGYDLEALGETVRARVFAHSAHLLQWEIQRIGQFEQSRIVPSFG.

Residues 39-205 (RTGGLAELFY…TAALLEGEPG (167 aa)) enclose the FAD-binding PCMH-type domain. Arginine 185 is a catalytic residue. The Proton donor role is filled by serine 234. Residue glutamate 304 is part of the active site.

This sequence belongs to the MurB family. FAD is required as a cofactor.

The protein resides in the cytoplasm. It catalyses the reaction UDP-N-acetyl-alpha-D-muramate + NADP(+) = UDP-N-acetyl-3-O-(1-carboxyvinyl)-alpha-D-glucosamine + NADPH + H(+). Its pathway is cell wall biogenesis; peptidoglycan biosynthesis. In terms of biological role, cell wall formation. In Bartonella quintana (strain Toulouse) (Rochalimaea quintana), this protein is UDP-N-acetylenolpyruvoylglucosamine reductase.